The primary structure comprises 638 residues: Threonine--tRNA ligase (638 aa).

A TGS domain is found at 1 to 61 (MPNITLPDGS…EADTPLAIVT (61 aa)). Residues 242 to 533 (DHRKLGRLLD…LIEHYAGALP (292 aa)) form a catalytic region. Positions 333, 384, and 510 each coordinate Zn(2+).

This sequence belongs to the class-II aminoacyl-tRNA synthetase family. Homodimer. Zn(2+) is required as a cofactor.

It is found in the cytoplasm. It carries out the reaction tRNA(Thr) + L-threonine + ATP = L-threonyl-tRNA(Thr) + AMP + diphosphate + H(+). Catalyzes the attachment of threonine to tRNA(Thr) in a two-step reaction: L-threonine is first activated by ATP to form Thr-AMP and then transferred to the acceptor end of tRNA(Thr). Also edits incorrectly charged L-seryl-tRNA(Thr). This chain is Threonine--tRNA ligase, found in Aromatoleum aromaticum (strain DSM 19018 / LMG 30748 / EbN1) (Azoarcus sp. (strain EbN1)).